Here is a 262-residue protein sequence, read N- to C-terminus: 3-methyl-2-oxobutanoate hydroxymethyltransferase (262 aa).

Mg(2+) is bound by residues aspartate 44 and aspartate 83. 3-methyl-2-oxobutanoate is bound by residues aspartate 44–serine 45, aspartate 83, and lysine 112. Residue glutamate 114 participates in Mg(2+) binding. Residue glutamate 180 is the Proton acceptor of the active site.

It belongs to the PanB family. In terms of assembly, homodecamer; pentamer of dimers. The cofactor is Mg(2+).

It localises to the cytoplasm. The catalysed reaction is 3-methyl-2-oxobutanoate + (6R)-5,10-methylene-5,6,7,8-tetrahydrofolate + H2O = 2-dehydropantoate + (6S)-5,6,7,8-tetrahydrofolate. Its pathway is cofactor biosynthesis; (R)-pantothenate biosynthesis; (R)-pantoate from 3-methyl-2-oxobutanoate: step 1/2. In terms of biological role, catalyzes the reversible reaction in which hydroxymethyl group from 5,10-methylenetetrahydrofolate is transferred onto alpha-ketoisovalerate to form ketopantoate. The protein is 3-methyl-2-oxobutanoate hydroxymethyltransferase of Chromobacterium violaceum (strain ATCC 12472 / DSM 30191 / JCM 1249 / CCUG 213 / NBRC 12614 / NCIMB 9131 / NCTC 9757 / MK).